The primary structure comprises 485 residues: Ribulose bisphosphate carboxylase large chain (485 aa).

Residues 1-2 (MS) constitute a propeptide that is removed on maturation. At P3 the chain carries N-acetylproline. K14 is subject to N6,N6,N6-trimethyllysine. N123 and T173 together coordinate substrate. The active-site Proton acceptor is K175. K177 serves as a coordination point for substrate. Mg(2+) is bound by residues K201, D203, and E204. K201 is subject to N6-carboxylysine. H294 (proton acceptor) is an active-site residue. Residues R295, H327, and S379 each contribute to the substrate site.

It belongs to the RuBisCO large chain family. Type I subfamily. In terms of assembly, heterohexadecamer of 8 large chains and 8 small chains; disulfide-linked. The disulfide link is formed within the large subunit homodimers. Requires Mg(2+) as cofactor. Post-translationally, the disulfide bond which can form in the large chain dimeric partners within the hexadecamer appears to be associated with oxidative stress and protein turnover.

It is found in the plastid. It localises to the chloroplast. The enzyme catalyses 2 (2R)-3-phosphoglycerate + 2 H(+) = D-ribulose 1,5-bisphosphate + CO2 + H2O. The catalysed reaction is D-ribulose 1,5-bisphosphate + O2 = 2-phosphoglycolate + (2R)-3-phosphoglycerate + 2 H(+). Functionally, ruBisCO catalyzes two reactions: the carboxylation of D-ribulose 1,5-bisphosphate, the primary event in carbon dioxide fixation, as well as the oxidative fragmentation of the pentose substrate in the photorespiration process. Both reactions occur simultaneously and in competition at the same active site. The chain is Ribulose bisphosphate carboxylase large chain from Bartlettina sordida (Purple torch).